Consider the following 471-residue polypeptide: Trigger factor (471 aa).

The PPIase FKBP-type domain occupies 165–244; the sequence is GDFVSIDLRA…VQSVKERVLP (80 aa). The disordered stretch occupies residues 407–471; sequence VTDASGNPVD…EATAEDPAKS (65 aa). The span at 416–443 shows a compositional bias: acidic residues; the sequence is DLEELVGGTEEDDVTEDATEDVTEDAAP.

It belongs to the FKBP-type PPIase family. Tig subfamily.

Its subcellular location is the cytoplasm. The enzyme catalyses [protein]-peptidylproline (omega=180) = [protein]-peptidylproline (omega=0). In terms of biological role, involved in protein export. Acts as a chaperone by maintaining the newly synthesized protein in an open conformation. Functions as a peptidyl-prolyl cis-trans isomerase. The polypeptide is Trigger factor (Kineococcus radiotolerans (strain ATCC BAA-149 / DSM 14245 / SRS30216)).